Here is a 258-residue protein sequence, read N- to C-terminus: Ribonuclease HII (258 aa).

The tract at residues 1–20 is disordered; it reads MRVAPSGGPPHHHAMIRATP. A compositionally biased stretch (basic residues) spans 10 to 20; sequence PHHHAMIRATP. An RNase H type-2 domain is found at 48–236; the sequence is WPVAGCDEVG…VVAARERHRA (189 aa). 3 residues coordinate a divalent metal cation: Asp-54, Glu-55, and Asp-145.

Belongs to the RNase HII family. Mn(2+) serves as cofactor. It depends on Mg(2+) as a cofactor.

Its subcellular location is the cytoplasm. It catalyses the reaction Endonucleolytic cleavage to 5'-phosphomonoester.. Functionally, endonuclease that specifically degrades the RNA of RNA-DNA hybrids. In Nitrobacter winogradskyi (strain ATCC 25391 / DSM 10237 / CIP 104748 / NCIMB 11846 / Nb-255), this protein is Ribonuclease HII.